We begin with the raw amino-acid sequence, 59 residues long: Protein translocase subunit SecE (59 aa).

A helical membrane pass occupies residues 33–53 (GAGIALVGLLGFIIFAVMTFV).

This sequence belongs to the SecE/SEC61-gamma family. Component of the Sec protein translocase complex. Heterotrimer consisting of SecY (alpha), SecG (beta) and SecE (gamma) subunits. The heterotrimers can form oligomers, although 1 heterotrimer is thought to be able to translocate proteins. Interacts with the ribosome. May interact with SecDF, and other proteins may be involved.

The protein localises to the cell membrane. Essential subunit of the Sec protein translocation channel SecYEG. Clamps together the 2 halves of SecY. May contact the channel plug during translocation. The chain is Protein translocase subunit SecE from Haloarcula marismortui (strain ATCC 43049 / DSM 3752 / JCM 8966 / VKM B-1809) (Halobacterium marismortui).